Reading from the N-terminus, the 620-residue chain is Endoglucanase 6 (620 aa).

The first 22 residues, 1–22, serve as a signal peptide directing secretion; that stretch reads MEKFAPVAALLLLLLCFPVAFS. The active-site Nucleophile is the Asp78. Catalysis depends on residues His411, Asp463, and Glu472. Asn554 and Asn564 each carry an N-linked (GlcNAc...) asparagine glycan.

The protein belongs to the glycosyl hydrolase 9 (cellulase E) family.

It localises to the secreted. The enzyme catalyses Endohydrolysis of (1-&gt;4)-beta-D-glucosidic linkages in cellulose, lichenin and cereal beta-D-glucans.. This chain is Endoglucanase 6, found in Arabidopsis thaliana (Mouse-ear cress).